A 622-amino-acid polypeptide reads, in one-letter code: MRKLYCVLLLSAFEFTYMINFGRGQNYWEHPYQKSDVYHPINEHREHSKEYEYPLHQEHTYQQEDSGEDENTLQHAYPIDHEGAEPAPQEQNLFSSIEIVERSNYMGNPWTEYMAKYDIKEVHGSGIRVDLGEDAEVAGTQYRLPSGKCPVFGKGIIIENSNTTFLKPVATGNQDLKDGGFAFPPTNPLISPMTLDHMRDFYKNNEYVKNLDELTLCSRHAGNMNPDNDKNSNYKYPAVYDYNDKKCHILYIAAQENNGPRYCNKDESKRNSMFCFRPAKDKSFQNYTYLSKNVVDNWEKVCPRKNLENAKFGLWVDGNCEDIPHVNEFSANDLFECNKLVFELSASDQPKQYEQHLTDYEKIKEGFKNKNASMIKSAFLPTGAFKADRYKSRGKGYNWGNYNRKTQKCEIFNVKPTCLINNSSYIATTALSHPNEVEHNFPCSLYKDEIKKEIERESKRIKLNDNDDEGNKKIIAPRIFISDDIDSLKCPCDPEIVSNSTCNFFVCKCVEKRAEVTSNNEVVVKEEYKDEYADIPEHKPTYDKMKIIIASSAAVAVLATILMVYLYKRKGNAEKYDKMDEPQDYGKSNSRNDEMLDPEASFWGEEKRASHTTPVLMEKPYY.

The first 24 residues, 1–24 (MRKLYCVLLLSAFEFTYMINFGRG), serve as a signal peptide directing secretion. At 25–546 (QNYWEHPYQK…EHKPTYDKMK (522 aa)) the chain is on the extracellular side. 5 disulfides stabilise this stretch: cysteine 149–cysteine 302, cysteine 217–cysteine 247, cysteine 263–cysteine 275, cysteine 320–cysteine 418, and cysteine 337–cysteine 409. The N-linked (GlcNAc...) asparagine glycan is linked to asparagine 162. N-linked (GlcNAc...) asparagine glycans are attached at residues asparagine 286, asparagine 371, asparagine 421, asparagine 422, and asparagine 499. Cystine bridges form between cysteine 443–cysteine 502, cysteine 490–cysteine 507, and cysteine 492–cysteine 509. A helical transmembrane segment spans residues 547 to 567 (IIIASSAAVAVLATILMVYLY). The Cytoplasmic portion of the chain corresponds to 568 to 622 (KRKGNAEKYDKMDEPQDYGKSNSRNDEMLDPEASFWGEEKRASHTTPVLMEKPYY). Positions 577 to 607 (DKMDEPQDYGKSNSRNDEMLDPEASFWGEEK) are disordered.

Belongs to the apicomplexan parasites AMA1 family.

The protein localises to the membrane. In terms of biological role, involved in parasite invasion of erythrocytes. This is Apical membrane antigen 1 (AMA-1) from Plasmodium falciparum (isolate 7G8).